Consider the following 537-residue polypeptide: Membrane protein insertase YidC (537 aa).

5 consecutive transmembrane segments (helical) span residues 6–26 (SLLALALLFISFLVYQQWEID), 341–363 (LVSNWGLAIIGVTLVVKAILYPL), 411–431 (LGGCLPLLIQMPIFIALYWTF), 449–469 (LSAQDPYYILPLLMGGSMFLL), and 490–510 (PVIFTVFFLWFPAGLVLYWLV).

Belongs to the OXA1/ALB3/YidC family. Type 1 subfamily. In terms of assembly, interacts with the Sec translocase complex via SecD. Specifically interacts with transmembrane segments of nascent integral membrane proteins during membrane integration.

It is found in the cell inner membrane. Its function is as follows. Required for the insertion and/or proper folding and/or complex formation of integral membrane proteins into the membrane. Involved in integration of membrane proteins that insert both dependently and independently of the Sec translocase complex, as well as at least some lipoproteins. Aids folding of multispanning membrane proteins. The protein is Membrane protein insertase YidC of Actinobacillus succinogenes (strain ATCC 55618 / DSM 22257 / CCUG 43843 / 130Z).